Consider the following 250-residue polypeptide: Type III pantothenate kinase (250 aa).

Residue 6 to 13 (DVGNTNTV) participates in ATP binding. 103-106 (GADR) serves as a coordination point for substrate. D105 functions as the Proton acceptor in the catalytic mechanism. D125 is a binding site for K(+). T128 is an ATP binding site. Position 180 (T180) interacts with substrate.

It belongs to the type III pantothenate kinase family. Homodimer. The cofactor is NH4(+). Requires K(+) as cofactor.

The protein localises to the cytoplasm. It carries out the reaction (R)-pantothenate + ATP = (R)-4'-phosphopantothenate + ADP + H(+). The protein operates within cofactor biosynthesis; coenzyme A biosynthesis; CoA from (R)-pantothenate: step 1/5. Catalyzes the phosphorylation of pantothenate (Pan), the first step in CoA biosynthesis. The protein is Type III pantothenate kinase of Frankia casuarinae (strain DSM 45818 / CECT 9043 / HFP020203 / CcI3).